We begin with the raw amino-acid sequence, 178 residues long: Large ribosomal subunit protein uL10 (178 aa).

This sequence belongs to the universal ribosomal protein uL10 family. As to quaternary structure, part of the ribosomal stalk of the 50S ribosomal subunit. The N-terminus interacts with L11 and the large rRNA to form the base of the stalk. The C-terminus forms an elongated spine to which L12 dimers bind in a sequential fashion forming a multimeric L10(L12)X complex.

Forms part of the ribosomal stalk, playing a central role in the interaction of the ribosome with GTP-bound translation factors. The polypeptide is Large ribosomal subunit protein uL10 (Leuconostoc mesenteroides subsp. mesenteroides (strain ATCC 8293 / DSM 20343 / BCRC 11652 / CCM 1803 / JCM 6124 / NCDO 523 / NBRC 100496 / NCIMB 8023 / NCTC 12954 / NRRL B-1118 / 37Y)).